Here is a 145-residue protein sequence, read N- to C-terminus: UPF0735 ACT domain-containing protein CLL_A2896 (145 aa).

In terms of domain architecture, ACT spans 69–144; the sequence is TFNLIVKDQT…YVEKIEFVAM (76 aa).

Belongs to the UPF0735 family.

The polypeptide is UPF0735 ACT domain-containing protein CLL_A2896 (Clostridium botulinum (strain Eklund 17B / Type B)).